Consider the following 443-residue polypeptide: Putative F-box/FBD/LRR-repeat protein At3g49030 (443 aa).

The F-box domain maps to 20-68 (EDRISELPEDLLLQILSDIPTENVIATSVLSKRWRSLWKMVPNLTFDFT). 6 LRR repeats span residues 74 to 100 (HQTF…QLNF), 152 to 179 (ILEI…RLYE), 180 to 205 (VHFK…SVHR), 218 to 252 (VPSL…NIVG), 272 to 297 (ISDV…SLES), and 320 to 345 (KERE…KLTG). Residues 357–408 (NWNPPKCVPECLLFHLEKFLWTGYEWQRGDEKEVATYILENARLLKKATFST) enclose the FBD domain.

This Arabidopsis thaliana (Mouse-ear cress) protein is Putative F-box/FBD/LRR-repeat protein At3g49030.